The primary structure comprises 321 residues: Acetyl-coenzyme A carboxylase carboxyl transferase subunit alpha (321 aa).

One can recognise a CoA carboxyltransferase C-terminal domain in the interval 37–298 (DLDDEIKRLQ…KQRILSDLED (262 aa)).

It belongs to the AccA family. As to quaternary structure, acetyl-CoA carboxylase is a heterohexamer composed of biotin carboxyl carrier protein (AccB), biotin carboxylase (AccC) and two subunits each of ACCase subunit alpha (AccA) and ACCase subunit beta (AccD).

It localises to the cytoplasm. It catalyses the reaction N(6)-carboxybiotinyl-L-lysyl-[protein] + acetyl-CoA = N(6)-biotinyl-L-lysyl-[protein] + malonyl-CoA. Its pathway is lipid metabolism; malonyl-CoA biosynthesis; malonyl-CoA from acetyl-CoA: step 1/1. Its function is as follows. Component of the acetyl coenzyme A carboxylase (ACC) complex. First, biotin carboxylase catalyzes the carboxylation of biotin on its carrier protein (BCCP) and then the CO(2) group is transferred by the carboxyltransferase to acetyl-CoA to form malonyl-CoA. This Mannheimia succiniciproducens (strain KCTC 0769BP / MBEL55E) protein is Acetyl-coenzyme A carboxylase carboxyl transferase subunit alpha.